Consider the following 525-residue polypeptide: Calcium uptake protein 1 homolog, mitochondrial (525 aa).

Positions 109-146 (ADAGQRPSSAADVNGEDKSSESESEDSEDEEAGSDLHL) are disordered. Acidic residues predominate over residues 130 to 141 (SESEDSEDEEAG). 2 consecutive EF-hand domains span residues 268-303 (ISRR…VRQQ) and 459-494 (LSDH…RVQR). Ca(2+) is bound by residues Asp-281, Asn-283, Asp-285, Asp-287, Glu-292, Asp-472, Asn-474, Asp-476, Gln-478, and Glu-483.

The protein belongs to the MICU1 family. MICU1 subfamily.

It localises to the mitochondrion intermembrane space. The protein resides in the mitochondrion inner membrane. Its function is as follows. Calcium sensor of the mitochondrial calcium uniporter (MCU) channel, which senses calcium level via its EF-hand domains. At low calcium levels, MICU1 occludes the pore of the MCU channel, preventing mitochondrial calcium uptake. At higher calcium levels, calcium-binding to MICU1 induces a conformational change that weakens MCU-MICU1 interactions and moves MICU1 away from the pore, allowing calcium permeation through the MCU channel. Also required to protect against manganese toxicity by preventing manganese uptake by MCU. During development, required in alpha/beta or gamma mushroom body neurons to support olfactory intermediate-term memory in the adult. The protein is Calcium uptake protein 1 homolog, mitochondrial of Drosophila melanogaster (Fruit fly).